Here is a 463-residue protein sequence, read N- to C-terminus: L-seryl-tRNA(Sec) selenium transferase (463 aa).

The residue at position 295 (lysine 295) is an N6-(pyridoxal phosphate)lysine.

Belongs to the SelA family. In terms of assembly, homodecamer; pentamer of dimers. Binds only one seryl-tRNA(Sec) per dimer. Pyridoxal 5'-phosphate serves as cofactor.

Its subcellular location is the cytoplasm. It carries out the reaction L-seryl-tRNA(Sec) + selenophosphate + H(+) = L-selenocysteinyl-tRNA(Sec) + phosphate. Its pathway is aminoacyl-tRNA biosynthesis; selenocysteinyl-tRNA(Sec) biosynthesis; selenocysteinyl-tRNA(Sec) from L-seryl-tRNA(Sec) (bacterial route): step 1/1. In terms of biological role, converts seryl-tRNA(Sec) to selenocysteinyl-tRNA(Sec) required for selenoprotein biosynthesis. The sequence is that of L-seryl-tRNA(Sec) selenium transferase from Salmonella typhimurium (strain LT2 / SGSC1412 / ATCC 700720).